A 351-amino-acid polypeptide reads, in one-letter code: Formyl peptide receptor-related sequence 1 (351 aa).

The Extracellular segment spans residues M1–I27. N4 and N10 each carry an N-linked (GlcNAc...) asparagine glycan. The chain crosses the membrane as a helical span at residues L28 to V50. Residues A51–T61 are Cytoplasmic-facing. A helical transmembrane segment spans residues I62–V83. Over E84 to L100 the chain is Extracellular. A disulfide bridge connects residues C98 and C176. Residues V101 to L121 form a helical membrane-spanning segment. At D122–S140 the chain is on the cytoplasmic side. The helical transmembrane segment at L141–L162 threads the bilayer. Topologically, residues F163–R205 are extracellular. A helical transmembrane segment spans residues F206–T226. At K227–V242 the chain is on the cytoplasmic side. A helical transmembrane segment spans residues L243 to V266. Over W267–P286 the chain is Extracellular. The chain crosses the membrane as a helical span at residues T287–G306. Over Q307–I351 the chain is Cytoplasmic.

This sequence belongs to the G-protein coupled receptor 1 family. In terms of tissue distribution, expressed exclusively in vomeronasal neurons. Expressed in 0.6 % of a subset of sensory neurons located in the basal layer of the vomeronasal organ. Each neuron appears to express only one receptor gene. Expressed mostly in neutrophils, followed by spleen and lung and expressed at very low levels in heart and liver.

It is found in the cell membrane. In terms of biological role, low affinity receptor for N-formyl-methionyl peptides. Receptor for lipoxin A4. May have an olfactory function associated with the identification of pathogens or of pathogenic states. This chain is Formyl peptide receptor-related sequence 1 (Fpr-s1), found in Mus musculus (Mouse).